A 170-amino-acid polypeptide reads, in one-letter code: Transcription factor E (170 aa).

An HTH TFE/IIEalpha-type domain is found at 1 to 93 (MKDVYLYIVE…TWYVNDEVIS (93 aa)).

Belongs to the TFE family. As to quaternary structure, monomer. Interaction with RNA polymerase subunits RpoF and RpoE is necessary for Tfe stimulatory transcription activity. Able to interact with Tbp and RNA polymerase in the absence of DNA promoter. Interacts both with the preinitiation and elongation complexes.

Transcription factor that plays a role in the activation of archaeal genes transcribed by RNA polymerase. Facilitates transcription initiation by enhancing TATA-box recognition by TATA-box-binding protein (Tbp), and transcription factor B (Tfb) and RNA polymerase recruitment. Not absolutely required for transcription in vitro, but particularly important in cases where Tbp or Tfb function is not optimal. It dynamically alters the nucleic acid-binding properties of RNA polymerases by stabilizing the initiation complex and destabilizing elongation complexes. Seems to translocate with the RNA polymerase following initiation and acts by binding to the non template strand of the transcription bubble in elongation complexes. The chain is Transcription factor E from Pyrobaculum calidifontis (strain DSM 21063 / JCM 11548 / VA1).